A 419-amino-acid polypeptide reads, in one-letter code: Creatine kinase S-type, mitochondrial (419 aa).

The N-terminal 39 residues, 1–39 (MASTFSKLLTGRNASLLFATLGTSALTTGYLVNRQKVCA), are a transit peptide targeting the mitochondrion. The segment at 40-64 (EARDQHKLFPPSADYPDLRKHNNCM) is cardiolipin-binding. The Phosphagen kinase N-terminal domain occupies 46-132 (KLFPPSADYP…FDPVIKLRHN (87 aa)). Positions 159–401 (YVLSSRVRTG…NYLVDCEKKL (243 aa)) constitute a Phosphagen kinase C-terminal domain. ATP contacts are provided by residues 162–166 (SSRVR) and H225. Y255 carries the phosphotyrosine modification. ATP-binding positions include R270, R326, 354-359 (RGTGGV), and D369. T356 bears the Phosphothreonine mark.

The protein belongs to the ATP:guanido phosphotransferase family. In terms of assembly, exists as an octamer composed of four CKMT2 homodimers.

It is found in the mitochondrion inner membrane. It catalyses the reaction creatine + ATP = N-phosphocreatine + ADP + H(+). Reversibly catalyzes the transfer of phosphate between ATP and various phosphogens (e.g. creatine phosphate). Creatine kinase isoenzymes play a central role in energy transduction in tissues with large, fluctuating energy demands, such as skeletal muscle, heart, brain and spermatozoa. In Oryctolagus cuniculus (Rabbit), this protein is Creatine kinase S-type, mitochondrial (CKMT2).